Reading from the N-terminus, the 249-residue chain is Sec-independent protein translocase protein TatC (249 aa).

A run of 6 helical transmembrane segments spans residues 18–38, 69–89, 96–116, 151–171, 187–207, and 208–228; these read VSVG…KNIF, AIVI…APGL, VILP…AFSY, LILG…LAKV, IVVI…SQIF, and MALP…MVNP.

This sequence belongs to the TatC family. As to quaternary structure, the Tat system comprises two distinct complexes: a TatABC complex, containing multiple copies of TatA, TatB and TatC subunits, and a separate TatA complex, containing only TatA subunits. Substrates initially bind to the TatABC complex, which probably triggers association of the separate TatA complex to form the active translocon.

The protein resides in the cell inner membrane. In terms of biological role, part of the twin-arginine translocation (Tat) system that transports large folded proteins containing a characteristic twin-arginine motif in their signal peptide across membranes. Together with TatB, TatC is part of a receptor directly interacting with Tat signal peptides. The chain is Sec-independent protein translocase protein TatC from Helicobacter pylori (strain J99 / ATCC 700824) (Campylobacter pylori J99).